The sequence spans 147 residues: Basic phospholipase A2 beta-bungarotoxin A4 chain (147 aa).

The N-terminal stretch at 1–19 is a signal peptide; it reads MNPAHLLVLSAVCVSLLGA. The propeptide occupies 20–27; that stretch reads ANIPPHPL. 6 cysteine pairs are disulfide-bonded: Cys-54/Cys-146, Cys-56/Cys-72, Cys-71/Cys-127, Cys-78/Cys-120, Cys-88/Cys-113, and Cys-106/Cys-118. The Ca(2+) site is built by Tyr-55, Gly-57, and Gly-59. The active site involves His-75. A Ca(2+)-binding site is contributed by Asp-76. Asp-121 is an active-site residue.

It belongs to the phospholipase A2 family. Group I subfamily. D49 sub-subfamily. Heterodimer; disulfide-linked. The A chain has phospholipase A2 activity and the B chain shows homology with the basic protease inhibitors. Ca(2+) is required as a cofactor. Expressed by the venom gland.

Its subcellular location is the secreted. It carries out the reaction a 1,2-diacyl-sn-glycero-3-phosphocholine + H2O = a 1-acyl-sn-glycero-3-phosphocholine + a fatty acid + H(+). Snake venom phospholipase A2 (PLA2) that shows presynaptic neurotoxicity. The A chain has phospholipase activity. PLA2 catalyzes the calcium-dependent hydrolysis of the 2-acyl groups in 3-sn-phosphoglycerides. In Bungarus candidus (Malayan krait), this protein is Basic phospholipase A2 beta-bungarotoxin A4 chain.